Reading from the N-terminus, the 451-residue chain is Bifunctional protein GlmU (451 aa).

The interval 1–232 (MTARSSLTIV…EDEVRGINTK (232 aa)) is pyrophosphorylase. Residues 11 to 14 (LAAG), K25, Q78, and 83 to 84 (GT) each bind UDP-N-acetyl-alpha-D-glucosamine. D108 lines the Mg(2+) pocket. UDP-N-acetyl-alpha-D-glucosamine-binding residues include G144, E158, N173, and N230. N230 is a Mg(2+) binding site. Positions 233–253 (AQLAEAESVMQARLRKAAMEA) are linker. The N-acetyltransferase stretch occupies residues 254–451 (GVTLIAPETV…MKTRGKKPEK (198 aa)). Residues R319 and K337 each coordinate UDP-N-acetyl-alpha-D-glucosamine. H349 functions as the Proton acceptor in the catalytic mechanism. Residues Y352 and N363 each contribute to the UDP-N-acetyl-alpha-D-glucosamine site. Acetyl-CoA-binding positions include A366, 372–373 (NY), S409, and R426.

In the N-terminal section; belongs to the N-acetylglucosamine-1-phosphate uridyltransferase family. It in the C-terminal section; belongs to the transferase hexapeptide repeat family. Homotrimer. Mg(2+) is required as a cofactor.

The protein resides in the cytoplasm. The enzyme catalyses alpha-D-glucosamine 1-phosphate + acetyl-CoA = N-acetyl-alpha-D-glucosamine 1-phosphate + CoA + H(+). The catalysed reaction is N-acetyl-alpha-D-glucosamine 1-phosphate + UTP + H(+) = UDP-N-acetyl-alpha-D-glucosamine + diphosphate. Its pathway is nucleotide-sugar biosynthesis; UDP-N-acetyl-alpha-D-glucosamine biosynthesis; N-acetyl-alpha-D-glucosamine 1-phosphate from alpha-D-glucosamine 6-phosphate (route II): step 2/2. The protein operates within nucleotide-sugar biosynthesis; UDP-N-acetyl-alpha-D-glucosamine biosynthesis; UDP-N-acetyl-alpha-D-glucosamine from N-acetyl-alpha-D-glucosamine 1-phosphate: step 1/1. It participates in bacterial outer membrane biogenesis; LPS lipid A biosynthesis. Catalyzes the last two sequential reactions in the de novo biosynthetic pathway for UDP-N-acetylglucosamine (UDP-GlcNAc). The C-terminal domain catalyzes the transfer of acetyl group from acetyl coenzyme A to glucosamine-1-phosphate (GlcN-1-P) to produce N-acetylglucosamine-1-phosphate (GlcNAc-1-P), which is converted into UDP-GlcNAc by the transfer of uridine 5-monophosphate (from uridine 5-triphosphate), a reaction catalyzed by the N-terminal domain. The protein is Bifunctional protein GlmU of Bradyrhizobium diazoefficiens (strain JCM 10833 / BCRC 13528 / IAM 13628 / NBRC 14792 / USDA 110).